We begin with the raw amino-acid sequence, 524 residues long: Cytochrome P450 monooxygenase lnaC (524 aa).

Residues 16 to 36 (ALAVSCIAVSLFLLSPWIAYA) traverse the membrane as a helical segment. Asparagine 150 carries an N-linked (GlcNAc...) asparagine glycan. Heme is bound at residue cysteine 471.

It belongs to the cytochrome P450 family. Heme is required as a cofactor.

It is found in the membrane. It functions in the pathway secondary metabolite biosynthesis. In terms of biological role, cytochrome P450 monooxygenase; part of the lna gene cluster that mediates the biosynthesis of diastereomeric piperazines. Lna and lnb clusters encode sets of enzymes that produce overlapping sets of previously undescribed metabolites such as piperazinomycin-like metabolites or morpholine. The lna and lnb biosynthetic pathways appear to be part of a signaling network that controls the formation of sclerotia, a resilient overwintering structure. One primary function of the non-canonical nonribosomal peptide synthetases lnaA and lnbA consists in the reduction of L-tyrosine. The presence in the clusters of tailoring enzymes such as the oxidoreductases lnaB, lnbB, lnaE or lnbE, as well as of the cytochrome P450 monooxygenases lnaC, lnaD, or lnbC, might explain formation of various diastereomeric piperazines. This chain is Cytochrome P450 monooxygenase lnaC, found in Aspergillus flavus (strain ATCC 200026 / FGSC A1120 / IAM 13836 / NRRL 3357 / JCM 12722 / SRRC 167).